Reading from the N-terminus, the 130-residue chain is Type VII secretion system extracellular protein C (130 aa).

This sequence belongs to the EsxC family. In terms of assembly, forms both homodimers and heterodimers with EsxA. Homodimerization is calcium-dependent.

The protein localises to the secreted. Functionally, implements its pathogenic function during infection. The sequence is that of Type VII secretion system extracellular protein C from Staphylococcus aureus (strain Mu50 / ATCC 700699).